Here is a 520-residue protein sequence, read N- to C-terminus: Kelch domain-containing protein 4 (520 aa).

Over residues 1–10 (MGKKGKKEKK) the composition is skewed to basic residues. The tract at residues 1–33 (MGKKGKKEKKGRGAEKTAAKMEKKVSKRSRKEE) is disordered. Residues 11–24 (GRGAEKTAAKMEKK) show a composition bias toward basic and acidic residues. 5 Kelch repeats span residues 77 to 129 (ELIL…VVPQ), 133 to 187 (QLWV…AWKR), 188 to 241 (QLIL…VTPQ), 243 to 289 (GIVV…MNPS), and 308 to 361 (QTLF…RRGR). 3 disordered regions span residues 346 to 379 (QLKG…AGTQ), 402 to 431 (LTAP…GPCP), and 481 to 520 (DPET…GAED). 2 positions are modified to phosphoserine: S413 and S418. The Kelch 6 repeat unit spans residues 443 to 494 (VLYVYGGMFEAGDRQVTLSDLHCLDLHRMEAWKALVEMDPETQEWLEETDSE).

In Homo sapiens (Human), this protein is Kelch domain-containing protein 4 (KLHDC4).